The following is a 141-amino-acid chain: uncharacterized protein (141 aa).

Belongs to the mimivirus L163/R849 family.

This is an uncharacterized protein from Acanthamoeba polyphaga mimivirus (APMV).